The chain runs to 424 residues: DNA primase DnaG (424 aa).

In terms of domain architecture, Toprim spans 166-241 (DTIIIVEGRA…KVDFIARAPE (76 aa)). Mg(2+) is bound by residues glutamate 172, aspartate 215, and aspartate 217.

This sequence belongs to the archaeal DnaG primase family. Forms a ternary complex with MCM helicase and DNA. Component of the archaeal exosome complex. Mg(2+) serves as cofactor.

The enzyme catalyses ssDNA + n NTP = ssDNA/pppN(pN)n-1 hybrid + (n-1) diphosphate.. Functionally, RNA polymerase that catalyzes the synthesis of short RNA molecules used as primers for DNA polymerase during DNA replication. Also part of the exosome, which is a complex involved in RNA degradation. Acts as a poly(A)-binding protein that enhances the interaction between heteromeric, adenine-rich transcripts and the exosome. The protein is DNA primase DnaG of Staphylothermus marinus (strain ATCC 43588 / DSM 3639 / JCM 9404 / F1).